We begin with the raw amino-acid sequence, 116 residues long: Ribosome-binding factor A (116 aa).

It belongs to the RbfA family. Monomer. Binds 30S ribosomal subunits, but not 50S ribosomal subunits or 70S ribosomes.

It is found in the cytoplasm. Functionally, one of several proteins that assist in the late maturation steps of the functional core of the 30S ribosomal subunit. Associates with free 30S ribosomal subunits (but not with 30S subunits that are part of 70S ribosomes or polysomes). Required for efficient processing of 16S rRNA. May interact with the 5'-terminal helix region of 16S rRNA. In Streptococcus agalactiae, this protein is Ribosome-binding factor A.